The primary structure comprises 770 residues: NAD-dependent malic enzyme (770 aa).

Residues 1 to 440 form a malic enzyme region; that stretch reads MNTGDKAKSQ…KLNRFVFRSG (440 aa). Catalysis depends on lysine 107, which acts as the Proton acceptor. Residues glutamate 149 and aspartate 150 each contribute to the a divalent metal cation site. The NAD(+) site is built by aspartate 175 and asparagine 300. The tract at residues 441 to 770 is phosphate acetyltransferase; sequence FIMKPVFAAA…LAVVESSHPV (330 aa).

The protein in the N-terminal section; belongs to the malic enzymes family. This sequence in the C-terminal section; belongs to the phosphate acetyltransferase and butyryltransferase family. In terms of assembly, homooctamer. The cofactor is Mg(2+). Mn(2+) serves as cofactor.

The enzyme catalyses (S)-malate + NAD(+) = pyruvate + CO2 + NADH. Its activity is regulated as follows. Subject to substrate inhibition and shows allosteric regulation by acetyl-CoA. Functionally, required for symbiotic nitrogen fixation. Plays a key role in the conversion of malate to acetyl-CoA for efficient tricarboxylic acid cycle function in nitrogen-fixating bacteria. This chain is NAD-dependent malic enzyme (dme), found in Rhizobium meliloti (strain 1021) (Ensifer meliloti).